A 67-amino-acid chain; its full sequence is Cell division protein ZapB (67 aa).

The stretch at 3-59 (LELLSKLETKIQTALETIELLKMELEEEKQKSIGLAEQNQQLSQDLNSWNEKVTGLV) forms a coiled coil.

Belongs to the ZapB family. Homodimer. The ends of the coiled-coil dimer bind to each other, forming polymers. Interacts with FtsZ.

The protein resides in the cytoplasm. Its function is as follows. Non-essential, abundant cell division factor that is required for proper Z-ring formation. It is recruited early to the divisome by direct interaction with FtsZ, stimulating Z-ring assembly and thereby promoting cell division earlier in the cell cycle. Its recruitment to the Z-ring requires functional FtsA or ZipA. The sequence is that of Cell division protein ZapB from Shewanella woodyi (strain ATCC 51908 / MS32).